A 339-amino-acid chain; its full sequence is Phenylalanine--tRNA ligase alpha subunit (339 aa).

Residue Glu-250 participates in Mg(2+) binding.

The protein belongs to the class-II aminoacyl-tRNA synthetase family. Phe-tRNA synthetase alpha subunit type 1 subfamily. As to quaternary structure, tetramer of two alpha and two beta subunits. Requires Mg(2+) as cofactor.

It localises to the cytoplasm. It catalyses the reaction tRNA(Phe) + L-phenylalanine + ATP = L-phenylalanyl-tRNA(Phe) + AMP + diphosphate + H(+). This Bacteroides fragilis (strain ATCC 25285 / DSM 2151 / CCUG 4856 / JCM 11019 / LMG 10263 / NCTC 9343 / Onslow / VPI 2553 / EN-2) protein is Phenylalanine--tRNA ligase alpha subunit.